A 270-amino-acid chain; its full sequence is Protein N-terminal and lysine N-methyltransferase EFM7 (270 aa).

A disordered region spans residues Met1–Lys45. S-adenosyl-L-methionine is bound by residues Trp63, Gly89–Ala91, Asp111, Trp158, and Ser182.

It belongs to the class I-like SAM-binding methyltransferase superfamily. EFM7 family.

It localises to the cytoplasm. Its function is as follows. S-adenosyl-L-methionine-dependent protein methyltransferase that trimethylates the N-terminal glycine 'Gly-2' of elongation factor 1-alpha, before also catalyzing the mono- and dimethylation of 'Lys-3'. This chain is Protein N-terminal and lysine N-methyltransferase EFM7, found in Kluyveromyces lactis (strain ATCC 8585 / CBS 2359 / DSM 70799 / NBRC 1267 / NRRL Y-1140 / WM37) (Yeast).